A 337-amino-acid chain; its full sequence is Large ribosomal subunit protein uL3 (337 aa).

The tract at residues 1–29 is disordered; sequence MPKINRPRRGSLAFSPRKRAQSPIPKYKS.

This sequence belongs to the universal ribosomal protein uL3 family. Part of the 50S ribosomal subunit. Forms a cluster with proteins L14 and L24e.

Functionally, one of the primary rRNA binding proteins, it binds directly near the 3'-end of the 23S rRNA, where it nucleates assembly of the 50S subunit. The polypeptide is Large ribosomal subunit protein uL3 (Methanoregula boonei (strain DSM 21154 / JCM 14090 / 6A8)).